Consider the following 144-residue polypeptide: Large ribosomal subunit protein uL11 (144 aa).

It belongs to the universal ribosomal protein uL11 family. As to quaternary structure, part of the ribosomal stalk of the 50S ribosomal subunit. Interacts with L10 and the large rRNA to form the base of the stalk. L10 forms an elongated spine to which L12 dimers bind in a sequential fashion forming a multimeric L10(L12)X complex. One or more lysine residues are methylated.

In terms of biological role, forms part of the ribosomal stalk which helps the ribosome interact with GTP-bound translation factors. This is Large ribosomal subunit protein uL11 from Marinomonas sp. (strain MWYL1).